A 159-amino-acid polypeptide reads, in one-letter code: MVQYPMTANGAAKLRSELKQLKTVTRPRIVKAIAEAREHGDLKENAEYHAAREQQGFCEGRIQDIEAKLSNARIIDITNITNNGKVIFGATVTIVNVETDAEVTYKIVGDDEANIKINLISVSSPLARGLIGKTLDDEISIVTPGGTIDYEIISVQYIA.

This sequence belongs to the GreA/GreB family.

Necessary for efficient RNA polymerase transcription elongation past template-encoded arresting sites. The arresting sites in DNA have the property of trapping a certain fraction of elongating RNA polymerases that pass through, resulting in locked ternary complexes. Cleavage of the nascent transcript by cleavage factors such as GreA or GreB allows the resumption of elongation from the new 3'terminus. GreA releases sequences of 2 to 3 nucleotides. The chain is Transcription elongation factor GreA from Psychromonas ingrahamii (strain DSM 17664 / CCUG 51855 / 37).